Consider the following 190-residue polypeptide: Holliday junction branch migration complex subunit RuvA (190 aa).

The interval M1–A65 is domain I. Residues N66 to L137 are domain II. The segment at L137–A141 is flexible linker. Positions A142–K190 are domain III.

The protein belongs to the RuvA family. Homotetramer. Forms an RuvA(8)-RuvB(12)-Holliday junction (HJ) complex. HJ DNA is sandwiched between 2 RuvA tetramers; dsDNA enters through RuvA and exits via RuvB. An RuvB hexamer assembles on each DNA strand where it exits the tetramer. Each RuvB hexamer is contacted by two RuvA subunits (via domain III) on 2 adjacent RuvB subunits; this complex drives branch migration. In the full resolvosome a probable DNA-RuvA(4)-RuvB(12)-RuvC(2) complex forms which resolves the HJ.

It is found in the cytoplasm. The RuvA-RuvB-RuvC complex processes Holliday junction (HJ) DNA during genetic recombination and DNA repair, while the RuvA-RuvB complex plays an important role in the rescue of blocked DNA replication forks via replication fork reversal (RFR). RuvA specifically binds to HJ cruciform DNA, conferring on it an open structure. The RuvB hexamer acts as an ATP-dependent pump, pulling dsDNA into and through the RuvAB complex. HJ branch migration allows RuvC to scan DNA until it finds its consensus sequence, where it cleaves and resolves the cruciform DNA. In Anaplasma marginale (strain Florida), this protein is Holliday junction branch migration complex subunit RuvA.